Consider the following 327-residue polypeptide: MSAANTERLKDEGSKLQVVVAGATAGMIARFVIAPLDVVKIRLQLQTHSLSDPLSQRAELLRGGPVYKGTLSTMRHIARQEGITGLWKGNVPAELLYITYSAVQFATYRSAAQLLHRVAGEDRQLPAAAESFVAGAAAGVTSTTVTYPLDLLRTRFAAQGSGDDRVYQSLRRAVADIWRDEGYRGFFRGIGPAVGQTFPFMGIFFAAYESLRAPLADLKLPFWGGQLALASMTASTLAKTAVFPLDLVRRRIQVQGPTRSKYVHKNIPEYKGTFSTISTIARTEGFRGLYRGLTVSLIKSAPASAVTMWTYERVLRALITFQSGRQD.

Solcar repeat units follow at residues 13–114 (GSKL…AAQL), 126–214 (PAAA…LRAP), and 222–317 (FWGG…VLRA). 6 consecutive transmembrane segments (helical) span residues 16 to 36 (LQVVVAGATAGMIARFVIAPL), 95 to 111 (LLYITYSAVQFATYRSA), 132 to 152 (FVAGAAAGVTSTTVTYPLDLL), 189 to 209 (GIGPAVGQTFPFMGIFFAAYE), 223 to 245 (WGGQLALASMTASTLAKTAVFPL), and 292 to 309 (GLTVSLIKSAPASAVTMW).

Belongs to the mitochondrial carrier (TC 2.A.29) family.

The protein localises to the mitochondrion inner membrane. Mitochondrial transporter that mediates uptake of thiamine pyrophosphate (ThPP) into mitochondria. This Pyricularia oryzae (strain 70-15 / ATCC MYA-4617 / FGSC 8958) (Rice blast fungus) protein is Mitochondrial thiamine pyrophosphate carrier 1 (TPC1).